The sequence spans 205 residues: N-(5'-phosphoribosyl)anthranilate isomerase (205 aa).

This sequence belongs to the TrpF family.

The catalysed reaction is N-(5-phospho-beta-D-ribosyl)anthranilate = 1-(2-carboxyphenylamino)-1-deoxy-D-ribulose 5-phosphate. The protein operates within amino-acid biosynthesis; L-tryptophan biosynthesis; L-tryptophan from chorismate: step 3/5. The protein is N-(5'-phosphoribosyl)anthranilate isomerase of Maridesulfovibrio salexigens (strain ATCC 14822 / DSM 2638 / NCIMB 8403 / VKM B-1763) (Desulfovibrio salexigens).